The following is a 441-amino-acid chain: Glutamyl-tRNA reductase (441 aa).

Substrate contacts are provided by residues 49-52 (TCNR), Ser109, 114-116 (EGQ), and Gln120. Residue Cys50 is the Nucleophile of the active site. Position 198–203 (198–203 (GAGRMS)) interacts with NADP(+).

This sequence belongs to the glutamyl-tRNA reductase family. Homodimer.

It carries out the reaction (S)-4-amino-5-oxopentanoate + tRNA(Glu) + NADP(+) = L-glutamyl-tRNA(Glu) + NADPH + H(+). The protein operates within porphyrin-containing compound metabolism; protoporphyrin-IX biosynthesis; 5-aminolevulinate from L-glutamyl-tRNA(Glu): step 1/2. It functions in the pathway porphyrin-containing compound metabolism; chlorophyll biosynthesis. Catalyzes the NADPH-dependent reduction of glutamyl-tRNA(Glu) to glutamate 1-semialdehyde (GSA). This chain is Glutamyl-tRNA reductase, found in Prochlorococcus marinus (strain NATL1A).